The following is a 359-amino-acid chain: Aflatoxin B1 aldehyde reductase member 2 (359 aa).

The transit peptide at 1 to 38 (MLSAASRVVSRAAVHCALRSPPPEARALAMSRPPPPRV) directs the protein to the mitochondrion. At Ser40 the chain carries Phosphoserine. Position 72 (Asp72) interacts with NADP(+). Tyr77 acts as the Proton donor in catalysis. Lys128 bears the N6-acetyllysine mark. Residue His141 participates in substrate binding. NADP(+)-binding positions include 171–172 (SN), Gln197, 226–236 (NPLAGGLLTGK), and Arg250. Residue Lys236 is modified to N6-succinyllysine. Phosphoserine is present on Ser255. 2 residues coordinate substrate: Tyr260 and Arg263. 318 to 326 (SSLEQLEQN) contacts NADP(+). Arg359 lines the substrate pocket.

It belongs to the aldo/keto reductase family. Aldo/keto reductase 2 subfamily. Homodimer. As to expression, detected in brain, liver, small intestine and testis, and at lower levels in heart, prostate, skeletal muscle and spleen. Detected in kidney proximal and distal tubules, endothelial cells lining the Bowman's capsules and some cysts. Detected at low levels in lung and pancreas (at protein level). Widely expressed.

It localises to the mitochondrion. The protein localises to the golgi apparatus. Its subcellular location is the cytoplasm. The catalysed reaction is 4-hydroxybutanoate + NADP(+) = succinate semialdehyde + NADPH + H(+). Catalyzes the NADPH-dependent reduction of succinic semialdehyde to gamma-hydroxybutyrate. May have an important role in producing the neuromodulator gamma-hydroxybutyrate (GHB). Has broad substrate specificity. Has NADPH-dependent aldehyde reductase activity towards 2-carboxybenzaldehyde, 2-nitrobenzaldehyde and pyridine-2-aldehyde (in vitro). Can reduce 1,2-naphthoquinone and 9,10-phenanthrenequinone (in vitro). Can reduce the dialdehyde protein-binding form of aflatoxin B1 (AFB1) to the non-binding AFB1 dialcohol. May be involved in protection of liver against the toxic and carcinogenic effects of AFB1, a potent hepatocarcinogen. In Homo sapiens (Human), this protein is Aflatoxin B1 aldehyde reductase member 2 (AKR7A2).